A 329-amino-acid polypeptide reads, in one-letter code: Prostaglandin reductase 1 (329 aa).

The residue at position 18 (T18) is a Phosphothreonine. S20 carries the phosphoserine modification. NADP(+) is bound by residues G152–G155, K178, Y193, N217, C239–Y245, F270–V272, and N321. K178 is modified (N6-(2-hydroxyisobutyryl)lysine; alternate). At K178 the chain carries N6-acetyllysine; alternate.

Belongs to the NADP-dependent oxidoreductase L4BD family. In terms of assembly, monomer or homodimer. High expression in the kidney, liver, and intestine but not in leukocytes.

It is found in the cytoplasm. The catalysed reaction is 13,14-dihydro-15-oxo-prostaglandin E1 + NADP(+) = 15-oxoprostaglandin E1 + NADPH + H(+). It catalyses the reaction 13,14-dihydro-15-oxo-prostaglandin E2 + NADP(+) = 15-oxoprostaglandin E2 + NADPH + H(+). The enzyme catalyses 13,14-dihydro-15-oxo-prostaglandin F1alpha + NADP(+) = 15-oxoprostaglandin F1alpha + NADPH + H(+). It carries out the reaction 13,14-dihydro-15-oxo-PGF2alpha + NADP(+) = 15-oxoprostaglandin F2alpha + NADPH + H(+). The catalysed reaction is leukotriene B4 + NADP(+) = 12-oxo-leukotriene B4 + NADPH + H(+). It catalyses the reaction 20-hydroxy-leukotriene B4 + NADP(+) = 12-oxo-20-hydroxy-leukotriene B4 + NADPH + H(+). The enzyme catalyses 6-trans-leukotriene B4 + NADP(+) = 12-oxo-(5S)-hydroxy-(6E,8E,10E,14Z)-eicosatetraenoate + NADPH + H(+). It carries out the reaction (5S,12S)-dihydroxy-(6E,10E,12E,14Z)-eicosatetraenoate + NADP(+) = 12-oxo-(5S)-hydroxy-(6E,8E,10E,14Z)-eicosatetraenoate + NADPH + H(+). The catalysed reaction is an n-alkanal + NADP(+) = an alk-2-enal + NADPH + H(+). It catalyses the reaction hexanal + NADP(+) = (E)-hex-2-enal + NADPH + H(+). The enzyme catalyses octanal + NADP(+) = (2E)-octenal + NADPH + H(+). It carries out the reaction decanal + NADP(+) = (2E)-decenal + NADPH + H(+). The catalysed reaction is dodecanal + NADP(+) = (2E)-dodecenal + NADPH + H(+). It catalyses the reaction 4-hydroxynonanal + NADP(+) = (E)-4-hydroxynon-2-enal + NADPH + H(+). The enzyme catalyses pentan-2-one + NADP(+) = (E)-pent-3-en-2-one + NADPH + H(+). It carries out the reaction nonan-2-one + NADP(+) = (3E)-nonen-2-one + NADPH + H(+). Its function is as follows. NAD(P)H-dependent oxidoreductase involved in metabolic inactivation of pro- and anti-inflammatory eicosanoids: prostaglandins (PG), leukotrienes (LT) and lipoxins (LX). Catalyzes with high efficiency the reduction of the 13,14 double bond of 15-oxoPGs, including 15-oxo-PGE1, 15-oxo-PGE2, 15-oxo-PGF1-alpha and 15-oxo-PGF2-alpha. Catalyzes with lower efficiency the oxidation of the hydroxyl group at C12 of LTB4 and its derivatives, converting them into biologically less active 12-oxo-LTB4 metabolites. Reduces 15-oxo-LXA4 to 13,14 dihydro-15-oxo-LXA4, enhancing neutrophil recruitment at the inflammatory site. May play a role in metabolic detoxification of alkenals and ketones. Reduces alpha,beta-unsaturated alkenals and ketones, particularly those with medium-chain length, showing highest affinity toward (2E)-decenal and (3E)-3-nonen-2-one. May inactivate 4-hydroxy-2-nonenal, a cytotoxic lipid constituent of oxidized low-density lipoprotein particles. The protein is Prostaglandin reductase 1 (PTGR1) of Homo sapiens (Human).